The primary structure comprises 66 residues: UPF0337 protein pc0632 (66 aa).

The protein belongs to the UPF0337 (CsbD) family.

This Protochlamydia amoebophila (strain UWE25) protein is UPF0337 protein pc0632.